A 1096-amino-acid polypeptide reads, in one-letter code: DNA-directed RNA polymerase subunit beta (1096 aa).

The interval 1069-1096 (DLMQDVNPRRSTPSRPTYESLGSDYQED) is disordered.

The protein belongs to the RNA polymerase beta chain family. In cyanobacteria the RNAP catalytic core is composed of 2 alpha, 1 beta, 1 beta', 1 gamma and 1 omega subunit. When a sigma factor is associated with the core the holoenzyme is formed, which can initiate transcription.

It catalyses the reaction RNA(n) + a ribonucleoside 5'-triphosphate = RNA(n+1) + diphosphate. DNA-dependent RNA polymerase catalyzes the transcription of DNA into RNA using the four ribonucleoside triphosphates as substrates. The protein is DNA-directed RNA polymerase subunit beta of Prochlorococcus marinus (strain SARG / CCMP1375 / SS120).